Reading from the N-terminus, the 917-residue chain is Ion channel POLLUX (917 aa).

The disordered stretch occupies residues 1–154; the sequence is MIPLPVAAAN…SSSPVARPQH (154 aa). Residues 7 to 19 are compositionally biased toward low complexity; it reads AAANSNSNSNSNS. Residues 78–89 are compositionally biased toward polar residues; sequence HQWNYPSFLGTT. Residues 119-136 are compositionally biased toward low complexity; sequence KTNTNTNTNTNTNTNTNT. Helical transmembrane passes span 160–180, 230–250, 290–310, and 342–362; these read PPIF…SSYL, LYIV…LDYL, LALL…LYAV, and VVSV…LGLV. 2 RCK N-terminal domains span residues 383-524 and 643-792; these read RNHI…ETVV and PEKI…DKSI. The stretch at 413–435 forms a coiled coil; the sequence is VIVVLAEKEKEEMEMDITKLEFD.

Belongs to the castor/pollux (TC 1.A.1.23) family. In terms of assembly, homooligomer. As to expression, mainly expressed in nodules. Also detected in infected and uninfected roots, leaves, seed pods, and flower buds.

The protein resides in the nucleus membrane. Functionally, ion channel with permeability for potassium. Involved in perinuclear calcium spiking but not in cytosolic calcium influx. Required for early signal transduction events leading to endosymbiosis. Acts early in a signal transduction chain leading from the perception of Nod factor to the activation of calcium spiking. Also involved in fungal entry into root epidermal cells during the establishment of the arbuscular mycorrhizal symbiosis. The polypeptide is Ion channel POLLUX (POLLUX) (Lotus japonicus (Lotus corniculatus var. japonicus)).